Here is a 169-residue protein sequence, read N- to C-terminus: S-ribosylhomocysteine lyase (169 aa).

Fe cation contacts are provided by His54, His58, and Cys128.

This sequence belongs to the LuxS family. As to quaternary structure, homodimer. It depends on Fe cation as a cofactor.

The catalysed reaction is S-(5-deoxy-D-ribos-5-yl)-L-homocysteine = (S)-4,5-dihydroxypentane-2,3-dione + L-homocysteine. Functionally, involved in the synthesis of autoinducer 2 (AI-2) which is secreted by bacteria and is used to communicate both the cell density and the metabolic potential of the environment. The regulation of gene expression in response to changes in cell density is called quorum sensing. Catalyzes the transformation of S-ribosylhomocysteine (RHC) to homocysteine (HC) and 4,5-dihydroxy-2,3-pentadione (DPD). The polypeptide is S-ribosylhomocysteine lyase (Shewanella sp. (strain ANA-3)).